A 226-amino-acid chain; its full sequence is Cytidylate kinase (226 aa).

Gly10–Thr18 contributes to the ATP binding site.

This sequence belongs to the cytidylate kinase family. Type 1 subfamily.

The protein resides in the cytoplasm. It carries out the reaction CMP + ATP = CDP + ADP. The enzyme catalyses dCMP + ATP = dCDP + ADP. This Streptococcus thermophilus (strain CNRZ 1066) protein is Cytidylate kinase.